The following is a 351-amino-acid chain: Ribosomal RNA small subunit methyltransferase H (351 aa).

S-adenosyl-L-methionine is bound by residues 48-50 (GGY), aspartate 67, phenylalanine 94, aspartate 115, and glutamine 122. A disordered region spans residues 274-351 (AAQASRHVPG…PAPQGRGPRR (78 aa)).

This sequence belongs to the methyltransferase superfamily. RsmH family.

It localises to the cytoplasm. The enzyme catalyses cytidine(1402) in 16S rRNA + S-adenosyl-L-methionine = N(4)-methylcytidine(1402) in 16S rRNA + S-adenosyl-L-homocysteine + H(+). Functionally, specifically methylates the N4 position of cytidine in position 1402 (C1402) of 16S rRNA. The sequence is that of Ribosomal RNA small subunit methyltransferase H from Methylorubrum extorquens (strain PA1) (Methylobacterium extorquens).